We begin with the raw amino-acid sequence, 130 residues long: Small ribosomal subunit protein uS8 (130 aa).

It belongs to the universal ribosomal protein uS8 family. Part of the 30S ribosomal subunit.

One of the primary rRNA binding proteins, it binds directly to 16S rRNA central domain where it helps coordinate assembly of the platform of the 30S subunit. The sequence is that of Small ribosomal subunit protein uS8 from Korarchaeum cryptofilum (strain OPF8).